The sequence spans 181 residues: MSANENNLIWIDLEMTGLDPERDRIIEIATLVTDANLNILAEGPTIAVHQSDEQLALMDGWNVRTHTASGLVERVKASTMGDREAELATLEFLKQWVPAGKSPICGNSIGQDRRFLFKYMPELEAYFHYRYLDVSTLKELARRWKPEILDGFTKQGTHQAMDDIRESVAELAYYREHFIKL.

The Exonuclease domain occupies 8 to 171; it reads LIWIDLEMTG…DDIRESVAEL (164 aa). Tyr129 is a catalytic residue.

This sequence belongs to the oligoribonuclease family. Homodimer.

It is found in the cytoplasm. Functionally, 3'-to-5' exoribonuclease specific for small oligoribonucleotides. This chain is Oligoribonuclease, found in Escherichia coli O157:H7.